The primary structure comprises 203 residues: Large ribosomal subunit protein uL6 (203 aa).

It belongs to the universal ribosomal protein uL6 family. Part of the 50S ribosomal subunit.

In terms of biological role, this protein binds to the 23S rRNA, and is important in its secondary structure. It is located near the subunit interface in the base of the L7/L12 stalk, and near the tRNA binding site of the peptidyltransferase center. This Hyphomonas neptunium (strain ATCC 15444) protein is Large ribosomal subunit protein uL6.